Consider the following 261-residue polypeptide: Indole-3-glycerol phosphate synthase (261 aa).

The protein belongs to the TrpC family.

The catalysed reaction is 1-(2-carboxyphenylamino)-1-deoxy-D-ribulose 5-phosphate + H(+) = (1S,2R)-1-C-(indol-3-yl)glycerol 3-phosphate + CO2 + H2O. It participates in amino-acid biosynthesis; L-tryptophan biosynthesis; L-tryptophan from chorismate: step 4/5. The protein is Indole-3-glycerol phosphate synthase of Burkholderia lata (strain ATCC 17760 / DSM 23089 / LMG 22485 / NCIMB 9086 / R18194 / 383).